Reading from the N-terminus, the 300-residue chain is NAD kinase (300 aa).

The Proton acceptor role is filled by aspartate 75. NAD(+)-binding positions include 75–76, 149–150, arginine 177, aspartate 179, 190–195, alanine 214, and glutamine 248; these read DG, ND, and TAYALS.

This sequence belongs to the NAD kinase family. The cofactor is a divalent metal cation.

It is found in the cytoplasm. It carries out the reaction NAD(+) + ATP = ADP + NADP(+) + H(+). In terms of biological role, involved in the regulation of the intracellular balance of NAD and NADP, and is a key enzyme in the biosynthesis of NADP. Catalyzes specifically the phosphorylation on 2'-hydroxyl of the adenosine moiety of NAD to yield NADP. The polypeptide is NAD kinase (Burkholderia vietnamiensis (strain G4 / LMG 22486) (Burkholderia cepacia (strain R1808))).